We begin with the raw amino-acid sequence, 493 residues long: Intermediate cleaving peptidase 55, mitochondrial (493 aa).

A mitochondrion-targeting transit peptide spans 1-19 (MQFLARNLVRRVSRTQVVS). Residues aspartate 296, aspartate 307, histidine 383, glutamate 410, and glutamate 433 each coordinate Mn(2+).

Belongs to the peptidase M24B family. Mn(2+) is required as a cofactor.

It is found in the mitochondrion. It localises to the nucleus. Functionally, aminopeptidase which cleaves preprotein intermediates that carry destabilizing N-ter amino acid residues after the mitochondrial processing peptidase (MPP) cleavage site and is thus critical for stabilization of the mitochondrial proteome. The protein is Intermediate cleaving peptidase 55, mitochondrial of Arabidopsis thaliana (Mouse-ear cress).